A 121-amino-acid chain; its full sequence is Ribonuclease P protein component (121 aa).

Belongs to the RnpA family. In terms of assembly, consists of a catalytic RNA component (M1 or rnpB) and a protein subunit.

The enzyme catalyses Endonucleolytic cleavage of RNA, removing 5'-extranucleotides from tRNA precursor.. RNaseP catalyzes the removal of the 5'-leader sequence from pre-tRNA to produce the mature 5'-terminus. It can also cleave other RNA substrates such as 4.5S RNA. The protein component plays an auxiliary but essential role in vivo by binding to the 5'-leader sequence and broadening the substrate specificity of the ribozyme. The chain is Ribonuclease P protein component from Oceanobacillus iheyensis (strain DSM 14371 / CIP 107618 / JCM 11309 / KCTC 3954 / HTE831).